A 298-amino-acid chain; its full sequence is Putative glycylpeptide N-tetradecanoyltransferase (298 aa).

Belongs to the NMT family.

It catalyses the reaction N-terminal glycyl-[protein] + tetradecanoyl-CoA = N-tetradecanoylglycyl-[protein] + CoA + H(+). Its function is as follows. Adds a myristoyl group to the N-terminal glycine residue of certain proteins. The protein is Putative glycylpeptide N-tetradecanoyltransferase of Melanoplus sanguinipes (Migratory grasshopper).